A 548-amino-acid chain; its full sequence is Probable malate:quinone oxidoreductase (548 aa).

The disordered stretch occupies residues 521–548 (DKPQAADSTPKPQLKPQPVQKEVADIAL). The segment covering 530-541 (PKPQLKPQPVQK) has biased composition (low complexity).

This sequence belongs to the MQO family. FAD is required as a cofactor.

The enzyme catalyses (S)-malate + a quinone = a quinol + oxaloacetate. It functions in the pathway carbohydrate metabolism; tricarboxylic acid cycle; oxaloacetate from (S)-malate (quinone route): step 1/1. This Escherichia coli (strain 55989 / EAEC) protein is Probable malate:quinone oxidoreductase.